The chain runs to 233 residues: Synaptogyrin-4 (233 aa).

The MARVEL domain maps to 18–169; it reads FLRRPKSISR…QAYLAFQDLR (152 aa). 4 helical membrane-spanning segments follow: residues 25 to 45, 66 to 86, 104 to 124, and 145 to 165; these read ISRIFGGVFSLVIFSSLLTDG, CSFAVGAGFLSFLSCLVFLAI, LLDFILAVLWAGVWFVAFCFL, and AAIALSFFSVPVWILQAYLAF. A disordered region spans residues 191 to 233; it reads SPSSTSPSNPPITGPNSLSYTSSALSPYMTTPKAPRLAMMPDS. The segment covering 204–219 has biased composition (polar residues); that stretch reads GPNSLSYTSSALSPYM.

The protein belongs to the synaptogyrin family.

The protein resides in the membrane. The protein is Synaptogyrin-4 (Syngr4) of Mus musculus (Mouse).